Consider the following 79-residue polypeptide: Defensin-1 (79 aa).

A signal peptide spans 1–23; sequence MKFLNVVAIALLVVACLAVYSNA. Intrachain disulfides connect cysteine 42/cysteine 69, cysteine 55/cysteine 75, and cysteine 59/cysteine 77.

It belongs to the invertebrate defensin family. Type 1 subfamily.

Its subcellular location is the secreted. The sequence is that of Defensin-1 (SMD1) from Stomoxys calcitrans (Stable fly).